The sequence spans 185 residues: Early nodulin-like protein 17 (185 aa).

An N-terminal signal peptide occupies residues 1–21 (MARRDQLVSFLCFFLIVSAVA). Residues 37-137 (KQYVVGGRSG…GQRLMINVDS (101 aa)) enclose the Phytocyanin domain. 2 N-linked (GlcNAc...) asparagine glycosylation sites follow: asparagine 79 and asparagine 94. Cysteine 93 and cysteine 125 are oxidised to a cystine. The disordered stretch occupies residues 136-155 (DSAPSPSPSPSPAPQEAATA). The GPI-anchor amidated serine moiety is linked to residue serine 156. Positions 157-185 (AATSSSAATAAHALLLAAMAMMGLILGEW) are cleaved as a propeptide — removed in mature form.

The protein belongs to the early nodulin-like (ENODL) family. As to expression, expressed ubiquitously. Accumulates mainly in anthers, stigmas and ovaries.

The protein resides in the cell membrane. May act as a carbohydrate transporter. Required for male fertility and seed yield. In Oryza sativa subsp. japonica (Rice), this protein is Early nodulin-like protein 17.